We begin with the raw amino-acid sequence, 115 residues long: NADH-ubiquinone oxidoreductase chain 3 (115 aa).

The next 3 membrane-spanning stretches (helical) occupy residues 4–24 (LMVL…AFWL), 55–75 (FFLV…LLPL), and 84–104 (INIM…GLAY).

It belongs to the complex I subunit 3 family. Core subunit of respiratory chain NADH dehydrogenase (Complex I) which is composed of 45 different subunits. Interacts with TMEM186. Interacts with TMEM242.

The protein localises to the mitochondrion membrane. The enzyme catalyses a ubiquinone + NADH + 5 H(+)(in) = a ubiquinol + NAD(+) + 4 H(+)(out). Its function is as follows. Core subunit of the mitochondrial membrane respiratory chain NADH dehydrogenase (Complex I) that is believed to belong to the minimal assembly required for catalysis. Complex I functions in the transfer of electrons from NADH to the respiratory chain. The immediate electron acceptor for the enzyme is believed to be ubiquinone. The sequence is that of NADH-ubiquinone oxidoreductase chain 3 from Onychomys leucogaster (Northern grasshopper mouse).